A 492-amino-acid polypeptide reads, in one-letter code: Gamma-aminobutyric acid receptor subunit alpha-3 (492 aa).

Residues 1 to 28 form the signal peptide; the sequence is MIITQTSHCYMTSLGILFLINILPGTTG. Positions 28-54 are disordered; it reads GQGESRRQEPGDFVKQDIGGLSPKHAP. Topologically, residues 29–274 are extracellular; that stretch reads QGESRRQEPG…MTTHFHLKRK (246 aa). Over residues 31 to 42 the composition is skewed to basic and acidic residues; the sequence is ESRRQEPGDFVK. Asn63 carries N-linked (GlcNAc...) asparagine glycosylation. A 4-aminobutanoate-binding site is contributed by Arg119. N-linked (GlcNAc...) asparagine glycans are attached at residues Asn163 and Asn176. Residue Thr182 participates in 4-aminobutanoate binding. Residues Cys191 and Cys205 are joined by a disulfide bond. An N-linked (GlcNAc...) asparagine glycan is attached at Asn228. The helical transmembrane segment at 275–295 threads the bilayer; it reads IGYFVIQTYLPCIMTVILSQV. Residues 296-305 are Cytoplasmic-facing; the sequence is SFWLNRESVP. The chain crosses the membrane as a helical span at residues 306–325; the sequence is ARTVFGVTTVLTMTTLSISA. Residues 326–336 are Extracellular-facing; that stretch reads RNSLPKVAYAT. A helical transmembrane segment spans residues 337 to 357; the sequence is AMDWFIAVCYAFVFSALIEFA. Residues 358–457 are Cytoplasmic-facing; it reads TVNYFTKRSW…TYNSVSKVDK (100 aa). The residue at position 426 (Ser426) is a Phosphoserine. Thr427 is modified (phosphothreonine). Ser433 and Ser442 each carry phosphoserine. The chain crosses the membrane as a helical span at residues 458–478; it reads ISRIIFPVLFAIFNLVYWATY. Residues 479–492 lie on the Extracellular side of the membrane; it reads VNRESAIKGMIRKQ.

The protein belongs to the ligand-gated ion channel (TC 1.A.9) family. Gamma-aminobutyric acid receptor (TC 1.A.9.5) subfamily. GABRA3 sub-subfamily. Heteropentamer, formed by a combination of alpha (GABRA1-6), beta (GABRB1-3), gamma (GABRG1-3), delta (GABRD), epsilon (GABRE), rho (GABRR1-3), pi (GABRP) and theta (GABRQ) chains, each subunit exhibiting distinct physiological and pharmacological properties. Binds UBQLN1. Interacts with GPHN.

Its subcellular location is the postsynaptic cell membrane. It localises to the cell membrane. It catalyses the reaction chloride(in) = chloride(out). Potentiated by etomidate, propofol, pregnanolone and flurazepam. Alpha subunit of the heteropentameric ligand-gated chloride channel gated by gamma-aminobutyric acid (GABA), a major inhibitory neurotransmitter in the brain. GABA-gated chloride channels, also named GABA(A) receptors (GABAAR), consist of five subunits arranged around a central pore and contain GABA active binding site(s) located at the alpha and beta subunit interface(s). When activated by GABA, GABAARs selectively allow the flow of chloride anions across the cell membrane down their electrochemical gradient. Chloride influx into the postsynaptic neuron following GABAAR opening decreases the neuron ability to generate a new action potential, thereby reducing nerve transmission. The sequence is that of Gamma-aminobutyric acid receptor subunit alpha-3 from Homo sapiens (Human).